Here is a 1382-residue protein sequence, read N- to C-terminus: Hepatocyte growth factor receptor (1382 aa).

The first 24 residues, 1–24 (MKASAVLAPGILALLFTLVQGNDG), serve as a signal peptide directing secretion. Topologically, residues 25-933 (ECQEALAKSE…VIVQPDQNFT (909 aa)) are extracellular. In terms of domain architecture, Sema spans 27 to 516 (QEALAKSEMN…TGKKITKIPL (490 aa)). N45, N100, and N106 each carry an N-linked (GlcNAc...) asparagine glycan. 4 cysteine pairs are disulfide-bonded: C95/C101, C98/C160, C133/C141, and C173/C176. N-linked (GlcNAc...) asparagine glycosylation is found at N203 and N359. 2 disulfide bridges follow: C299-C364 and C386-C398. N400 and N406 each carry an N-linked (GlcNAc...) asparagine glycan. 4 disulfides stabilise this stretch: C521–C539, C527–C562, C530–C546, and C542–C552. IPT/TIG domains lie at 564-656 (PAIH…FSYV), 658-740 (PVIT…FSYR), and 743-837 (PIVH…LIYV). An O-linked (Man) threonine glycan is attached at T583. 2 N-linked (GlcNAc...) asparagine glycosylation sites follow: N608 and N636. 2 O-linked (Man) threonine glycosylation sites follow: T677 and T762. N786, N880, and N931 each carry an N-linked (GlcNAc...) asparagine glycan. The chain crosses the membrane as a helical span at residues 934–956 (GLIVGVVSISIILLLLLGLFLWM). The Cytoplasmic segment spans residues 957–1382 (KKRKQIKDLG…QDNVNGEVDT (426 aa)). S967 is subject to Phosphoserine. T978 bears the Phosphothreonine mark. S991, S998, and S1001 each carry phosphoserine. Y1004 bears the Phosphotyrosine mark. The region spanning 1079-1346 (VHFNEVIGRG…RISAIFSTFI (268 aa)) is the Protein kinase domain. ATP-binding positions include 1085 to 1093 (IGRGHFGCV) and K1111. D1205 acts as the Proton acceptor in catalysis. The segment at 1213–1382 (LDEKFTVKVA…QDNVNGEVDT (170 aa)) is interaction with RANBP9. Position 1231 is a phosphotyrosine (Y1231). 2 positions are modified to phosphotyrosine; by autocatalysis: Y1235 and Y1236. T1290 bears the Phosphothreonine mark. Residues 1321–1360 (WHPKAEMRPSFSELVSRISAIFSTFIGEHYVHVNATYVNV) are interaction with MUC20. Phosphotyrosine; by autocatalysis is present on residues Y1350 and Y1357. A Phosphotyrosine modification is found at Y1366.

The protein belongs to the protein kinase superfamily. Tyr protein kinase family. Heterodimer made of an alpha chain (50 kDa) and a beta chain (145 kDa) which are disulfide linked. Binds PLXNB1. Interacts when phosphorylated with downstream effectors including STAT3, PIK3R1, SRC, PCLG1, GRB2 and GAB1. Interacts with SPSB1, SPSB2 and SPSB4. Interacts with INPP5D/SHIP1. When phosphorylated at Tyr-1357, interacts with INPPL1/SHIP2. Interacts with RANBP9 and RANBP10, as well as SPSB1, SPSB2, SPSB3 and SPSB4. SPSB1 binding occurs in the presence and in the absence of HGF, however HGF treatment has a positive effect on this interaction. Interacts with MUC20; prevents interaction with GRB2 and suppresses hepatocyte growth factor-induced cell proliferation. Interacts with GRB10. Interacts with PTPN1 and PTPN2. Interacts with HSP90AA1 and HSP90AB1; the interaction suppresses MET kinase activity. Interacts with tensin TNS3. Interacts (when phosphorylated) with tensin TNS4 (via SH2 domain); the interaction increases MET protein stability by inhibiting MET endocytosis and subsequent lysosomal degradation. In terms of processing, autophosphorylated in response to ligand binding on Tyr-1235 and Tyr-1236 in the kinase domain leading to further phosphorylation of Tyr-1350 and Tyr-1357 in the C-terminal multifunctional docking site. Dephosphorylated by PTPRJ at Tyr-1350 and Tyr-1366. Dephosphorylated by PTPN1 and PTPN2. Post-translationally, ubiquitinated. Ubiquitination by CBL regulates the receptor stability and activity through proteasomal degradation. O-mannosylation of IPT/TIG domains by TMEM260 is required for protein maturation. O-mannosylated residues are composed of single mannose glycans that are not elongated or modified.

The protein resides in the membrane. The catalysed reaction is L-tyrosyl-[protein] + ATP = O-phospho-L-tyrosyl-[protein] + ADP + H(+). Its activity is regulated as follows. In its inactive state, the C-terminal tail interacts with the catalytic domain and inhibits the kinase activity. Upon ligand binding, the C-terminal tail is displaced and becomes phosphorylated, thus increasing the kinase activity. Receptor tyrosine kinase that transduces signals from the extracellular matrix into the cytoplasm by binding to hepatocyte growth factor/HGF ligand. Regulates many physiological processes including proliferation, scattering, morphogenesis and survival. Ligand binding at the cell surface induces autophosphorylation of MET on its intracellular domain that provides docking sites for downstream signaling molecules. Following activation by ligand, interacts with the PI3-kinase subunit PIK3R1, PLCG1, SRC, GRB2, STAT3 or the adapter GAB1. Recruitment of these downstream effectors by MET leads to the activation of several signaling cascades including the RAS-ERK, PI3 kinase-AKT, or PLCgamma-PKC. The RAS-ERK activation is associated with the morphogenetic effects while PI3K/AKT coordinates prosurvival effects. During embryonic development, MET signaling plays a role in gastrulation, development and migration of muscles and neuronal precursors, angiogenesis and kidney formation. In adults, participates in wound healing as well as organ regeneration and tissue remodeling. Also promotes differentiation and proliferation of hematopoietic cells. The sequence is that of Hepatocyte growth factor receptor (MET) from Eulemur macaco macaco (Black lemur).